The following is a 343-amino-acid chain: MNIMRTTMLLAFMTALFMGVGYLVGGGSGMVVALFIAGGLNFFSYWNSDKIVLRMYGAREVDEHSSPVYYRIVTKLAQRASLPQPKVYIINNAQPNAFATGRDPQNAAVAASTGLLKQLSAEEISGVMAHELAHIEHRDTLTMTLTATIAGAISMLGNFALLMGMGRQRNSSGNSQGAGMLGTVIALFVAPFAAMLVQMAISRTREYAADRRGAEICGNPLWLASALSKISGGGQTFYNEEAEHNPATAHMFIVNPLRGEGADSLFSTHPATENRIAALHKQAEKMAKEGNKGTKFAVENGLYRKHGNLEDEDLNPEAQNGFTHNQKKKTVRRGKDRPTWLRH.

Transmembrane regions (helical) follow at residues 7–24 and 29–46; these read TMLLAFMTALFMGVGYLV and GMVVALFIAGGLNFFSYW. Position 130 (H130) interacts with Zn(2+). The active site involves E131. H134 is a Zn(2+) binding site. The next 2 helical transmembrane spans lie at 145 to 165 and 177 to 197; these read LTATIAGAISMLGNFALLMGM and GAGMLGTVIALFVAPFAAMLV. E206 is a Zn(2+) binding site. Residues 308 to 343 are disordered; it reads NLEDEDLNPEAQNGFTHNQKKKTVRRGKDRPTWLRH. Residues 325 to 335 show a composition bias toward basic residues; sequence NQKKKTVRRGK.

This sequence belongs to the peptidase M48B family. The cofactor is Zn(2+).

It is found in the cell inner membrane. The protein is Protease HtpX homolog of Bartonella bacilliformis (strain ATCC 35685 / KC583 / Herrer 020/F12,63).